Reading from the N-terminus, the 488-residue chain is Putative serine carboxypeptidase-like 30 (488 aa).

The first 28 residues, 1-28, serve as a signal peptide directing secretion; that stretch reads MDNHTKSFSSLLISLWFTALLILVEMVS. Disulfide bonds link Cys99–Cys368, Cys262–Cys275, and Cys299–Cys336. An N-linked (GlcNAc...) asparagine glycan is attached at Asn150. Residue Ser192 is part of the active site. An N-linked (GlcNAc...) asparagine glycan is attached at Asn263. N-linked (GlcNAc...) asparagine glycosylation is found at Asn364 and Asn375. Active-site residues include Asp405 and His457.

This sequence belongs to the peptidase S10 family. As to expression, expression not detected.

The protein localises to the secreted. Probable carboxypeptidase. In Arabidopsis thaliana (Mouse-ear cress), this protein is Putative serine carboxypeptidase-like 30 (SCPL30).